A 675-amino-acid chain; its full sequence is MGKIKKKGTSGQAKNYITRTQAVRKLQISLPDFRRLCIFKGIYPREPRNKKKASKTSTPNTTFYYTKDIQYLLHEPLLRKFREQKAVAKKIARSLGRGEVGDAARLEKNHAPKLTLDHVIKERYPTFIDALRDLDDALSLLFLFANLPSTAHVPPKTIALCQRLCHEFQHYLITTNSLRKSFLSIKGIYYQATIQGQDIMWLVPYRFVQRVNGDVDYRIMATFVDFYTTLLGFVNFRLYSSIGLRYPPKFDTRSDENGAELAAFTLEGRGVGDAPKAIEAGNTQATTSTNKEVSKEIQAKVDDVIKSAGLDEAKEEPAAETTEESSETIDKFEPAAPEADTLPQPDLSGSEAGSLFAPFTFYISREAPRAPLEFILRAFGCKRIGWDAVLGDGAFTHDETDTRITHQIVDRPQLPESSLPAIPAASKDGSDAVQKVKPGTRIPGRTYVQPQWVWDCINEGKLVRPDLYAPGATLPPHLSPWVKPSRGGYDPKASLAEQEEEGEAELDEDSDEEMEEAANDKKAEAKADVGSESEDEDESVDGGMDVAGTDDDESESEEEEEDFGGFEEEEAASESEDEEEAARTQHQKELEAEAAGLPFSSNGATSDESKKKASQAKKIAAKKRKEEEELERQKMMMSRKKRKLLEKMIYSNKKQSEEAAKLRSKRRKLEKEATK.

The segment covering 308-317 has biased composition (basic and acidic residues); the sequence is AGLDEAKEEP. The disordered stretch occupies residues 308-330; it reads AGLDEAKEEPAAETTEESSETID. The 120-residue stretch at 351 to 470 folds into the BRCT domain; sequence EAGSLFAPFT…KLVRPDLYAP (120 aa). The interval 474 to 675 is disordered; it reads LPPHLSPWVK…RRKLEKEATK (202 aa). Residues 497 to 517 are compositionally biased toward acidic residues; it reads EQEEEGEAELDEDSDEEMEEA. Residues 518-529 are compositionally biased toward basic and acidic residues; that stretch reads ANDKKAEAKADV. 2 stretches are compositionally biased toward acidic residues: residues 531 to 540 and 548 to 580; these read SESEDEDESV and GTDD…DEEE. Positions 567-675 form a coiled coil; that stretch reads EEEEAASESE…RRKLEKEATK (109 aa). Residues 581–591 show a composition bias toward basic and acidic residues; the sequence is AARTQHQKELE. Over residues 612-623 the composition is skewed to basic residues; it reads KASQAKKIAAKK. A compositionally biased stretch (basic and acidic residues) spans 624-634; the sequence is RKEEEELERQK.

It belongs to the pescadillo family. In terms of assembly, component of the NOP7 complex, composed of erb1, nop7 and ytm1. The complex is held together by erb1, which interacts with nop7 via its N-terminal domain and with ytm1 via a high-affinity interaction between the seven-bladed beta-propeller domains of the 2 proteins. The NOP7 complex associates with the 66S pre-ribosome.

It is found in the nucleus. Its subcellular location is the nucleolus. The protein resides in the nucleoplasm. Its function is as follows. Component of the NOP7 complex, which is required for maturation of the 25S and 5.8S ribosomal RNAs and formation of the 60S ribosome. This is Pescadillo homolog (nop7) from Neosartorya fischeri (strain ATCC 1020 / DSM 3700 / CBS 544.65 / FGSC A1164 / JCM 1740 / NRRL 181 / WB 181) (Aspergillus fischerianus).